The primary structure comprises 153 residues: Ubiquitin/ISG15-conjugating enzyme E2 L6 (153 aa).

The UBC core domain occupies 2–149 (TASKRVAKEL…AEEFTLQYGV (148 aa)). The active-site Glycyl thioester intermediate is the Cys86.

Belongs to the ubiquitin-conjugating enzyme family. In terms of assembly, interacts with RNF19A, RNF19B and RNF144B. Interacts with FLT3 (tyrosine phosphorylated). Post-translationally, ISGylated.

The catalysed reaction is S-ubiquitinyl-[E1 ubiquitin-activating enzyme]-L-cysteine + [E2 ubiquitin-conjugating enzyme]-L-cysteine = [E1 ubiquitin-activating enzyme]-L-cysteine + S-ubiquitinyl-[E2 ubiquitin-conjugating enzyme]-L-cysteine.. It functions in the pathway protein modification; protein ubiquitination. Catalyzes the covalent attachment of ubiquitin to other proteins. Functions in the E6/E6-AP-induced ubiquitination of p53/TP53. Promotes ubiquitination and subsequent proteasomal degradation of FLT3. In Rattus norvegicus (Rat), this protein is Ubiquitin/ISG15-conjugating enzyme E2 L6 (Ube2l6).